The primary structure comprises 669 residues: Protein fem-1 homolog A (669 aa).

ANK repeat units lie at residues 2 to 31, 40 to 70, 82 to 111, 115 to 145, 149 to 178, 182 to 211, and 214 to 243; these read DLRT…REEL, GGGT…SVEA, EGAP…SVNR, TNST…DLEV, HGHT…QVNR, KGNT…RMER, and YGMT…GQEQ. Phosphoserine is present on Ser108. The disordered stretch occupies residues 240-278; sequence GQEQVAGGEAQPGLPQEDPSTSQGCAQPQGAPCCSSSPE. TPR repeat units lie at residues 298-332 and 390-423; these read VEAL…RHQG and SYYI…QQSN. 2 ANK repeats span residues 534 to 576 and 580 to 609; these read NGFT…DPDS and DNNT…HMDA.

It belongs to the fem-1 family. Component of a CRL2 E3 ubiquitin-protein ligase complex, also named ECS (Elongin BC-CUL2/5-SOCS-box protein) complex, composed of CUL2, Elongin BC (ELOB and ELOC), RBX1 and substrate-specific adapter FEM1A. Interacts with PTGER4. Interacts with NFKB1; the interaction is direct. Post-translationally, phosphorylated; highly phosphorylated in myoblasts and myotubes. Phosphorylation at Ser-108 promotes PGE2-EP4-mediated inhibition of inflammation. Dephosphorylated by protein phosphatase 2A (PP2A). Present in macrophages derived from peripheral blood monocytes. Also present in atheromata (at protein level).

The protein localises to the mitochondrion. Its subcellular location is the cytoplasm. It participates in protein modification; protein ubiquitination. Substrate-recognition component of a Cul2-RING (CRL2) E3 ubiquitin-protein ligase complex of the DesCEND (destruction via C-end degrons) pathway, which recognizes a C-degron located at the extreme C terminus of target proteins, leading to their ubiquitination and degradation. The C-degron recognized by the DesCEND pathway is usually a motif of less than ten residues and can be present in full-length proteins, truncated proteins or proteolytically cleaved forms. The CRL2(FEM1A) complex specifically recognizes proteins with an arginine at the C-terminus: recognizes and binds proteins ending with -Lys/Arg-Xaa-Arg and -Lys/Arg-Xaa-Xaa-Arg C-degrons, such as SIL1 or OR51B2, leading to their ubiquitination and degradation. Promotes ubiquitination and degradation of SLBP. Involved in PGE2-EP4-mediated inhibition of inflammation of macrophages via interaction with NFKB1 and PTGER4. Promotes inflammation in brain microglia through MAP2K4/MKK4-mediated signaling. The chain is Protein fem-1 homolog A from Homo sapiens (Human).